The sequence spans 112 residues: CLAVATA3/ESR (CLE)-related protein 44 (112 aa).

The N-terminal stretch at Met1 to Ser39 is a signal peptide. Residues Asn41–Asn112 form a disordered region. Residues Gln62–Met71 show a composition bias toward polar residues. Hydroxyproline occurs at positions 104 and 107. Residue Pro107 is glycosylated (O-linked (Ara...) hydroxyproline).

Belongs to the CLV3/ESR signal peptide family. As to quaternary structure, interacts specifically with the leucine-rich repeat receptor-like protein kinase TDR, especially in the presence of SERK2. In terms of processing, the O-glycosylation (arabinosylation) of the hydroxyproline Pro-107 enhances binding affinity of the CLE44p peptide for its receptor. As to expression, mostly expressed in flowers and leaves. Widely expressed along the vascular strands. In roots and hypocotyls, present in endodermal cells as well as cells in the phloem and the adjacent pericycle.

It is found in the secreted. The protein localises to the extracellular space. In terms of biological role, extracellular signal peptide that regulates cell fate. May act with TDR as a ligand-receptor pair in a signal transduction pathway that represses tracheary element differentiation but promotes the formation of procambial cells adjacent to phloem cells in the veins. Regulates the transition of protophloem cells from proliferation to differentiation, thus impinging on postembryonic growth capacity of the root meristem; this signaling pathway requires CRN and CLV2. The protein is CLAVATA3/ESR (CLE)-related protein 44 of Arabidopsis thaliana (Mouse-ear cress).